The chain runs to 615 residues: MSKYTILDKINTPSDLKLIPESQLKILSAELRAFLVDTLDVSGGHFASSLGATELTVALHYVYNAPYDNIVWDVGHQTYIHKILTGRKDKLVTIKKDGGISGFPKRSESEYDTFGVGHSSTSISAALGMAIADRLQGKSSNTVAVIGDGAITGGMAFEALNHAGGIKEDILVILNDNEMSISDNVGGLSAHFSKIISGGFYNSIREKGKEVLKNIPPIFEFVKKVETQTKGMFVPANFFEDLGFYYVGPIDGHDVTELVKTLRILKDHKGPKLLHVITKKGKGYTKAESDPIKFHHVAPSFHSGENVITKASKPTYSNIFGDWICQKAAKDKRLVGITPAMKEGSDLIRFSQLYPHRYFDVAIAEQHAVTFAGGLACQGLKPVVAIYSTFLQRAYDQVIHDIALQNLDVLYAVDRAGLVGADGATHDGSFDLAFMRCIPNHVIMTPSDENEAYHMLELGYEYNGPAMVRYPRGAGIGAEITDSLDLELGKAKIVKQGSKIAILNFGTLLPLAKQLAEKYHATVIDMRFVKPLDEIMLDKVSQTHEIILTLEENCIAGGAGSAVNEYFVAKDLSNKIIVRNFGLQDKFLNHGTKDLLLAQSKLCVENISQELDKLI.

Thiamine diphosphate is bound by residues His76 and 117-119 (GHS). A Mg(2+)-binding site is contributed by Asp148. Thiamine diphosphate-binding positions include 149–150 (GA), Asn177, Tyr284, and Glu365. Asn177 lines the Mg(2+) pocket.

It belongs to the transketolase family. DXPS subfamily. As to quaternary structure, homodimer. Requires Mg(2+) as cofactor. Thiamine diphosphate serves as cofactor.

It catalyses the reaction D-glyceraldehyde 3-phosphate + pyruvate + H(+) = 1-deoxy-D-xylulose 5-phosphate + CO2. Its pathway is metabolic intermediate biosynthesis; 1-deoxy-D-xylulose 5-phosphate biosynthesis; 1-deoxy-D-xylulose 5-phosphate from D-glyceraldehyde 3-phosphate and pyruvate: step 1/1. In terms of biological role, catalyzes the acyloin condensation reaction between C atoms 2 and 3 of pyruvate and glyceraldehyde 3-phosphate to yield 1-deoxy-D-xylulose-5-phosphate (DXP). The chain is 1-deoxy-D-xylulose-5-phosphate synthase from Francisella tularensis subsp. novicida (strain U112).